We begin with the raw amino-acid sequence, 475 residues long: MVMMLVMLSLHGTAARLNRREWDSVIQLPTEPVDDEVGTRWAVLVAGSNGYGNYRHQADVCHAYQLLIKGGVKEENIVVFMYDDIAYNAMNPRPGVIINHPQGPDVYAGVPKDYTGEDVTPENLYAVILGDKSKVKGGSGKVINSNPEDRIFIFYSDHGGPGVLGMPNAPFVYAMDFIDVLKKKHASGGYKEMVIYIEACESGSIFEGIMPKDLNIYVTTASNAQENSFGTYCPGMNPPPPEEYVTCLGDLYSVSWMEDSETHNLKRETVQQQYQSVRKRTSNSNSYRFGSHVMQYGDTNITAEKLYLYHGFDPATVNFPPHNGNLEAKMEVVNQRDAELLFMWQMYQRSNHQPEKKTHILEQITETVKHRNHLDGSVELIGVLLYGPGKSSSVLHSVRAPGLPLVDDWTCLKSMVRVFETHCGSLTQYGMKHMRAFGNVCNSGVSKASMEEACKAACGGYDAGLLYPSNTGYSA.

The signal sequence occupies residues 1–15 (MVMMLVMLSLHGTAA). Residues 16–35 (RLNRREWDSVIQLPTEPVDD) constitute a propeptide that is removed on maturation. Residue histidine 158 is part of the active site. The active-site Nucleophile is cysteine 200. Cysteine 233 and cysteine 247 are joined by a disulfide. Asparagine 300 carries N-linked (GlcNAc...) asparagine glycosylation. Disulfide bonds link cysteine 411–cysteine 441 and cysteine 423–cysteine 458.

This sequence belongs to the peptidase C13 family. Homodimer.

The enzyme catalyses Hydrolysis of proteins and small molecule substrates at -Asn-|-Xaa- bonds.. Its activity is regulated as follows. Repressed by various protease inhibitors including p-chloromercuribenzene sulfonic acid (PCMBS), N-ethylmaleimide, kininogen, elastatinal, cystatin EW and leupeptin. Functionally, asparaginyl endopeptidase able to cleave almost all peptide bonds on the carboxyl side of Asn residues, except at the NH2 terminus or second position or with N-glycosylated Asn. Responsible for the maturation (circular permutation) of concanavalin A from its precursor, by performing both cleavage and cleavage-coupled transpeptidation to form conA. This Canavalia ensiformis (Jack bean) protein is Legumain.